Here is a 1092-residue protein sequence, read N- to C-terminus: Leukemia inhibitory factor receptor (1092 aa).

The first 43 residues, Met-1–Gly-43, serve as a signal peptide directing secretion. Over Leu-44–Ser-828 the chain is Extracellular. Positions Lys-45–Asp-126 constitute a Fibronectin type-III 1 domain. 2 cysteine pairs are disulfide-bonded: Cys-53–Cys-63 and Cys-80–Cys-88. Asn-164, Asn-199, Asn-238, and Asn-261 each carry an N-linked (GlcNAc...) asparagine glycan. 2 disulfides stabilise this stretch: Cys-208–Cys-265 and Cys-336–Cys-346. Fibronectin type-III domains are found at residues Val-330 to His-429, Asp-430 to Thr-529, Gly-533 to Asp-624, Pro-622 to Val-714, and Pro-719 to Ser-828. N-linked (GlcNAc...) asparagine glycans are attached at residues Asn-385, Asn-402, Asn-421, Asn-440, Asn-453, and Asn-476. A disulfide bridge links Cys-461 with Cys-506. Residues Trp-514–Ser-518 carry the WSXWS motif motif. N-linked (GlcNAc...) asparagine glycosylation is found at Asn-567, Asn-647, Asn-658, Asn-675, Asn-724, and Asn-782. The chain crosses the membrane as a helical span at residues Val-829–Cys-853. Residues Tyr-854 to Asp-1092 lie on the Cytoplasmic side of the membrane. The short motif at Phe-864 to Glu-872 is the Box 1 motif element. 2 positions are modified to phosphoserine: Ser-922 and Ser-1039. Positions Glu-1009–Asp-1092 are disordered. Polar residues-rich tracts occupy residues Ala-1027–Gln-1062 and Ser-1081–Asp-1092.

The protein belongs to the type I cytokine receptor family. Type 2 subfamily. In terms of assembly, heterodimer composed of LIFR and IL6ST. The heterodimer formed by LIFR and IL6ST interacts with the complex formed by CNTF and CNTFR. In terms of tissue distribution, placenta, liver, kidney, heart, lung, brain, and embryos. The liver may be the primary site of synthesis of the secreted form.

The protein resides in the cell membrane. Its subcellular location is the secreted. Functionally, signal-transducing molecule. May have a common pathway with IL6ST. The soluble form inhibits the biological activity of LIF by blocking its binding to receptors on target cells. The polypeptide is Leukemia inhibitory factor receptor (Lifr) (Mus musculus (Mouse)).